We begin with the raw amino-acid sequence, 368 residues long: Cyclic di-GMP phosphodiesterase TM_0186 (368 aa).

The region spanning 2-114 is the Response regulatory domain; sequence TVLIVEDDDI…LLRLKITHAL (113 aa). The residue at position 49 (Asp49) is a 4-aspartylphosphate. Residues 148-345 enclose the HD-GYP domain; the sequence is YEDFLFEVLE…ITDVYRREKD (198 aa). Glu169, His173, His205, Asp206, His234, His260, His261, and Asp289 together coordinate a divalent metal cation. Residues 341–368 are disordered; that stretch reads RREKDEDTSHNGGRSHQSSPGEGVEGIR. A compositionally biased stretch (polar residues) spans 350–360; sequence HNGGRSHQSSP.

The catalysed reaction is 3',3'-c-di-GMP + 2 H2O = 2 GMP + 2 H(+). Its activity is regulated as follows. Can function in vivo with either divalent iron or manganese occupying di- and trimetal sites. Dimetal is necessary and sufficient to catalyze conversion of c-di-GMP to pGpG, but conversion of pGpG to GMP requires an occupied trimetal site. Its function is as follows. Phosphodiesterase (PDE) that catalyzes the hydrolysis of cyclic diguanylate (c-di-GMP) to GMP. Hydrolyzes c-di-GMP to GMP in a two-step reaction, via the linear intermediate 5'-phosphoguanylyl(3'-&gt;5')guanosine (pGpG). This Thermotoga maritima (strain ATCC 43589 / DSM 3109 / JCM 10099 / NBRC 100826 / MSB8) protein is Cyclic di-GMP phosphodiesterase TM_0186.